Consider the following 202-residue polypeptide: Na(+)-translocating NADH-quinone reductase subunit E (202 aa).

A run of 6 helical transmembrane segments spans residues 11-31 (AVFV…FIAI), 35-55 (VETA…TVPA), 81-101 (FLGL…LEML), 114-134 (GVFL…LFMV), 144-164 (TVYG…LAGI), and 180-200 (LGIT…FSGV).

Belongs to the NqrDE/RnfAE family. As to quaternary structure, composed of six subunits; NqrA, NqrB, NqrC, NqrD, NqrE and NqrF.

It is found in the cell inner membrane. It carries out the reaction a ubiquinone + n Na(+)(in) + NADH + H(+) = a ubiquinol + n Na(+)(out) + NAD(+). NQR complex catalyzes the reduction of ubiquinone-1 to ubiquinol by two successive reactions, coupled with the transport of Na(+) ions from the cytoplasm to the periplasm. NqrA to NqrE are probably involved in the second step, the conversion of ubisemiquinone to ubiquinol. This Pseudomonas aeruginosa (strain LESB58) protein is Na(+)-translocating NADH-quinone reductase subunit E.